Reading from the N-terminus, the 295-residue chain is MAYNSNSNNNNNNIVVVFDFDKTIIDVDSDNWVIDELGFTDLFNQLLPTMPWNTLMDRMMKELHDQGKTIEEIKQVLRTIPIHPRVVPAIKSAHDLGCELRIVSDANMFFIETIVEHLGISELFSEINSNPGYVDERGTLKISPYHDFTKSPHSCSCGTCPPNMCKGLIIERIQQSLAKEGKKKMIYLGDGAGDYCPSLKLNTEDYVMPRKNFPVWDLISQNPMLIKAAIREWTDGQSMEMILIGTIEEIRLEEEKEKMLTSAENNCKMQTISIGINNVHHEPILPRALRVSQSS.

Asp19 serves as the catalytic Nucleophile. Residues Asp19 and Asp21 each contribute to the Mg(2+) site. Asp21 serves as the catalytic Proton donor. Substrate contacts are provided by Asp30 and Asp105. Position 190 (Asp190) interacts with Mg(2+).

The protein belongs to the HAD-like hydrolase superfamily. Tetramer. Mg(2+) serves as cofactor. It depends on Fe(2+) as a cofactor. The cofactor is Ni(2+). Co(2+) is required as a cofactor. Requires Mn(2+) as cofactor.

The catalysed reaction is diphosphate + H2O = 2 phosphate + H(+). Functionally, catalyzes the specific cleavage of pyrophosphate. This is Inorganic pyrophosphatase 1 (PS2) from Arabidopsis thaliana (Mouse-ear cress).